The chain runs to 190 residues: uncharacterized protein (190 aa).

This is an uncharacterized protein from Borreliella burgdorferi (strain ATCC 35210 / DSM 4680 / CIP 102532 / B31) (Borrelia burgdorferi).